The chain runs to 90 residues: Beta-microseminoprotein (90 aa).

5 disulfide bridges follow: cysteine 2-cysteine 16, cysteine 34-cysteine 70, cysteine 37-cysteine 46, cysteine 39-cysteine 47, and cysteine 61-cysteine 84. Valine 90 bears the Valine amide mark.

This sequence belongs to the beta-microseminoprotein family.

Its subcellular location is the secreted. The protein is Beta-microseminoprotein (MSMB) of Struthio camelus (Common ostrich).